The primary structure comprises 257 residues: Transcription factor MYB3 (257 aa).

2 HTH myb-type domains span residues 9 to 61 (KAHM…MNYL) and 62 to 116 (RPDL…KRKL). 2 consecutive DNA-binding regions (H-T-H motif) follow at residues 37-61 (WRSL…MNYL) and 89-112 (WSLI…NTHI). The Required for interaction with CPL1 motif lies at 189–193 (LNLEL).

As to quaternary structure, interacts with CPL1. In terms of tissue distribution, expressed in roots, stems, leaves, flowers and siliques.

Its subcellular location is the nucleus. The protein is Transcription factor MYB3 (MYB3) of Arabidopsis thaliana (Mouse-ear cress).